The primary structure comprises 629 residues: Rho GTPase-activating protein conundrum (629 aa).

The segment at 185-294 is required for interaction with Moe; that stretch reads PPKSGTYADI…CRDSSSLDSC (110 aa). The disordered stretch occupies residues 237–261; sequence SIGRSKESRSENDARSQKKKSSEVL. Over residues 240-258 the composition is skewed to basic and acidic residues; sequence RSKESRSENDARSQKKKSS. The Rho-GAP domain occupies 359–565; it reads VSINALIRRD…ILILRGEKLF (207 aa).

Interacts with Moe (via FERM domain).

The protein localises to the cytoplasm. The protein resides in the cell membrane. It is found in the cell cortex. Its subcellular location is the cell junction. GTPase-activating protein (GAP) for Rho1; functions with the ERM protein Moe to regulate Rho1 and control proliferation in the developing epithelium. Recruited by Moe to the cell cortex where it negatively regulates Rho1 activity. Can also promote cell proliferation independently of its GAP activity, perhaps by acting with Arf6 to positively regulate Rac1. The sequence is that of Rho GTPase-activating protein conundrum from Drosophila melanogaster (Fruit fly).